A 199-amino-acid chain; its full sequence is Oligoribonuclease (199 aa).

The region spanning 5 to 170 (LVWIDCEMTG…ADIRESIREL (166 aa)) is the Exonuclease domain. Residue Tyr-127 is part of the active site.

This sequence belongs to the oligoribonuclease family.

Its subcellular location is the cytoplasm. Functionally, 3'-to-5' exoribonuclease specific for small oligoribonucleotides. The sequence is that of Oligoribonuclease from Rhodococcus jostii (strain RHA1).